Here is a 216-residue protein sequence, read N- to C-terminus: MKQDSRFPNLFITDHPLIQHKLTHMRDKDTSTRTFRELLREITLLMGYEITRNLPITTKRVETPLVAVDAPVIAGKKLAIVPVLRAGIGMSDGLLDLVPSARVGHIGVYRADDHRPVEYLVRLPDLEDRIFILCDPMVATGYSAVHAVDVLKRRNVPAANIMFVALVAAPEGVQVFQDAHPDVKLFVASLDSHLNEHAYIVPGLGDAGDRLFGTKN.

5-phospho-alpha-D-ribose 1-diphosphate-binding positions include Arg-85, Arg-110, and 135–143 (DPMVATGYS). Residues Ile-200 and 205–207 (GDA) each bind uracil. Asp-206 contributes to the 5-phospho-alpha-D-ribose 1-diphosphate binding site.

It belongs to the UPRTase family. Requires Mg(2+) as cofactor.

It carries out the reaction UMP + diphosphate = 5-phospho-alpha-D-ribose 1-diphosphate + uracil. The protein operates within pyrimidine metabolism; UMP biosynthesis via salvage pathway; UMP from uracil: step 1/1. Allosterically activated by GTP. In terms of biological role, catalyzes the conversion of uracil and 5-phospho-alpha-D-ribose 1-diphosphate (PRPP) to UMP and diphosphate. The chain is Uracil phosphoribosyltransferase from Burkholderia cenocepacia (strain ATCC BAA-245 / DSM 16553 / LMG 16656 / NCTC 13227 / J2315 / CF5610) (Burkholderia cepacia (strain J2315)).